Consider the following 874-residue polypeptide: Alanine--tRNA ligase (874 aa).

Zn(2+) is bound by residues His-564, His-568, Cys-665, and His-669.

It belongs to the class-II aminoacyl-tRNA synthetase family. It depends on Zn(2+) as a cofactor.

Its subcellular location is the cytoplasm. The catalysed reaction is tRNA(Ala) + L-alanine + ATP = L-alanyl-tRNA(Ala) + AMP + diphosphate. Catalyzes the attachment of alanine to tRNA(Ala) in a two-step reaction: alanine is first activated by ATP to form Ala-AMP and then transferred to the acceptor end of tRNA(Ala). Also edits incorrectly charged Ser-tRNA(Ala) and Gly-tRNA(Ala) via its editing domain. This chain is Alanine--tRNA ligase, found in Paraburkholderia phytofirmans (strain DSM 17436 / LMG 22146 / PsJN) (Burkholderia phytofirmans).